Reading from the N-terminus, the 213-residue chain is Redox-sensing transcriptional repressor Rex (213 aa).

Residues 17 to 56 (LYYRIFKRFHSENIEKASSKQIAEAIGIDSATVRRDFSYF) constitute a DNA-binding region (H-T-H motif). Position 91-96 (91-96 (GVGNIG)) interacts with NAD(+).

This sequence belongs to the transcriptional regulatory Rex family. In terms of assembly, homodimer.

It is found in the cytoplasm. Functionally, modulates transcription in response to changes in cellular NADH/NAD(+) redox state. In Streptococcus mutans serotype c (strain ATCC 700610 / UA159), this protein is Redox-sensing transcriptional repressor Rex.